Reading from the N-terminus, the 331-residue chain is Phenol 2-monooxygenase, oxygenase component DmpL (331 aa).

This sequence belongs to the TmoE/XamoE family. The multicomponent enzyme phenol hydroxylase is formed by DmpL (P1 component), DmpM (P2 component), DmpN (P3 component), DmpO (P4 component) and DmpP (P5 component). The oxygenase component is a dimer composed of three subunits, DmpL, DmpN and DmpO (DmpLNO). DmpL interacts with the auxiliary protein DmpK (P0 component).

The catalysed reaction is phenol + NADH + O2 + H(+) = catechol + NAD(+) + H2O. It functions in the pathway aromatic compound metabolism; phenol degradation. With respect to regulation, requires DmpM for efficient turnover. The activity of DmpLNO oxygenase is inhibited by dithiothreitol (DTT) by a mechanism apparently involving H(2)O(2) generation. Functionally, part of a multicomponent enzyme which catalyzes the degradation of phenol and some of its methylated derivatives. DmpL, DmpN and DmpO form the oxygenase component of the complex. Required for growth on phenol and for in vitro phenol hydroxylase activity. The protein is Phenol 2-monooxygenase, oxygenase component DmpL of Pseudomonas sp. (strain CF600).